The sequence spans 335 residues: Phosphate acyltransferase (335 aa).

The protein belongs to the PlsX family. As to quaternary structure, homodimer. Probably interacts with PlsY.

It is found in the cytoplasm. It catalyses the reaction a fatty acyl-[ACP] + phosphate = an acyl phosphate + holo-[ACP]. Its pathway is lipid metabolism; phospholipid metabolism. Catalyzes the reversible formation of acyl-phosphate (acyl-PO(4)) from acyl-[acyl-carrier-protein] (acyl-ACP). This enzyme utilizes acyl-ACP as fatty acyl donor, but not acyl-CoA. The chain is Phosphate acyltransferase from Clostridium botulinum (strain Langeland / NCTC 10281 / Type F).